We begin with the raw amino-acid sequence, 704 residues long: DNA ligase (704 aa).

NAD(+)-binding positions include 43–47, 92–93, and Glu124; these read DADYD and SL. The active-site N6-AMP-lysine intermediate is the Lys126. 4 residues coordinate NAD(+): Arg147, Glu182, Lys298, and Lys322. Residues Cys427, Cys430, Cys445, and Cys451 each coordinate Zn(2+). The 80-residue stretch at 625 to 704 folds into the BRCT domain; sequence PVASPVAGKI…DGWLRLIGDA (80 aa).

The protein belongs to the NAD-dependent DNA ligase family. LigA subfamily. It depends on Mg(2+) as a cofactor. Mn(2+) is required as a cofactor.

The enzyme catalyses NAD(+) + (deoxyribonucleotide)n-3'-hydroxyl + 5'-phospho-(deoxyribonucleotide)m = (deoxyribonucleotide)n+m + AMP + beta-nicotinamide D-nucleotide.. DNA ligase that catalyzes the formation of phosphodiester linkages between 5'-phosphoryl and 3'-hydroxyl groups in double-stranded DNA using NAD as a coenzyme and as the energy source for the reaction. It is essential for DNA replication and repair of damaged DNA. The protein is DNA ligase of Cereibacter sphaeroides (strain ATCC 17023 / DSM 158 / JCM 6121 / CCUG 31486 / LMG 2827 / NBRC 12203 / NCIMB 8253 / ATH 2.4.1.) (Rhodobacter sphaeroides).